The chain runs to 347 residues: Tryptophan--tRNA ligase (347 aa).

Residues 10–12 (QAS) and 18–19 (GN) contribute to the ATP site. The short motif at 11–19 (ASGRQHLGN) is the 'HIGH' region element. Asp140 provides a ligand contact to L-tryptophan. ATP is bound by residues 152 to 154 (GND), Ile191, and 200 to 204 (KMSKS). The short motif at 200–204 (KMSKS) is the 'KMSKS' region element.

The protein belongs to the class-I aminoacyl-tRNA synthetase family. As to quaternary structure, homodimer.

The protein localises to the cytoplasm. The catalysed reaction is tRNA(Trp) + L-tryptophan + ATP = L-tryptophyl-tRNA(Trp) + AMP + diphosphate + H(+). Its function is as follows. Catalyzes the attachment of tryptophan to tRNA(Trp). In Mycoplasma genitalium (strain ATCC 33530 / DSM 19775 / NCTC 10195 / G37) (Mycoplasmoides genitalium), this protein is Tryptophan--tRNA ligase.